The following is a 230-amino-acid chain: Urease accessory protein UreF (230 aa).

This sequence belongs to the UreF family. UreD, UreF and UreG form a complex that acts as a GTP-hydrolysis-dependent molecular chaperone, activating the urease apoprotein by helping to assemble the nickel containing metallocenter of UreC. The UreE protein probably delivers the nickel.

Its subcellular location is the cytoplasm. Required for maturation of urease via the functional incorporation of the urease nickel metallocenter. The chain is Urease accessory protein UreF from Cupriavidus taiwanensis (strain DSM 17343 / BCRC 17206 / CCUG 44338 / CIP 107171 / LMG 19424 / R1) (Ralstonia taiwanensis (strain LMG 19424)).